The chain runs to 479 residues: Ribosomal RNA small subunit methyltransferase F (479 aa).

S-adenosyl-L-methionine is bound by residues 125–131, E149, D176, and D194; that span reads AAAPGSK. The Nucleophile role is filled by C247.

It belongs to the class I-like SAM-binding methyltransferase superfamily. RsmB/NOP family.

It localises to the cytoplasm. It carries out the reaction cytidine(1407) in 16S rRNA + S-adenosyl-L-methionine = 5-methylcytidine(1407) in 16S rRNA + S-adenosyl-L-homocysteine + H(+). In terms of biological role, specifically methylates the cytosine at position 1407 (m5C1407) of 16S rRNA. The protein is Ribosomal RNA small subunit methyltransferase F of Shigella boydii serotype 18 (strain CDC 3083-94 / BS512).